Reading from the N-terminus, the 496-residue chain is Cobyric acid synthase (496 aa).

One can recognise a GATase cobBQ-type domain in the interval 256-444; that stretch reads KINIAVVLLR…IHGILDNQAF (189 aa). Catalysis depends on cysteine 337, which acts as the Nucleophile. Histidine 436 is an active-site residue.

The protein belongs to the CobB/CobQ family. CobQ subfamily.

Its pathway is cofactor biosynthesis; adenosylcobalamin biosynthesis. Its function is as follows. Catalyzes amidations at positions B, D, E, and G on adenosylcobyrinic A,C-diamide. NH(2) groups are provided by glutamine, and one molecule of ATP is hydrogenolyzed for each amidation. This Phocaeicola vulgatus (strain ATCC 8482 / DSM 1447 / JCM 5826 / CCUG 4940 / NBRC 14291 / NCTC 11154) (Bacteroides vulgatus) protein is Cobyric acid synthase.